The sequence spans 379 residues: Alcohol dehydrogenase class-3 (379 aa).

Ser-2 carries the N-acetylserine modification. 7 residues coordinate Zn(2+): Cys-48, His-70, Cys-100, Cys-103, Cys-106, Cys-114, and Cys-177.

The protein belongs to the zinc-containing alcohol dehydrogenase family. Class-III subfamily. Zn(2+) is required as a cofactor.

It carries out the reaction a primary alcohol + NAD(+) = an aldehyde + NADH + H(+). It catalyses the reaction a secondary alcohol + NAD(+) = a ketone + NADH + H(+). The enzyme catalyses S-(hydroxymethyl)glutathione + NADP(+) = S-formylglutathione + NADPH + H(+). The catalysed reaction is S-(hydroxymethyl)glutathione + NAD(+) = S-formylglutathione + NADH + H(+). It carries out the reaction octan-1-ol + NAD(+) = octanal + NADH + H(+). Functionally, class-III ADH is remarkably ineffective in oxidizing ethanol, but it readily catalyzes the oxidation of long-chain primary alcohols and the oxidation of S-(hydroxymethyl) glutathione. This is Alcohol dehydrogenase class-3 (Fdh) from Drosophila melanogaster (Fruit fly).